A 415-amino-acid polypeptide reads, in one-letter code: G-protein coupled receptor daf-38 (415 aa).

Low complexity predominate over residues 1 to 19 (MLLPSNLTTSTLMTSSSES). Residues 1 to 25 (MLLPSNLTTSTLMTSSSESYDADNP) form a disordered region. Over 1 to 35 (MLLPSNLTTSTLMTSSSESYDADNPGLPPEPILSD) the chain is Extracellular. Residues 36 to 56 (YVEMFTLVLNFIVGAPLNLAA) form a helical membrane-spanning segment. Residues 57 to 75 (YTQLSERPTSTRLDLLKRS) are Cytoplasmic-facing. The helical transmembrane segment at 76–96 (LNYSDLLVLFIYVPSRACWLL) threads the bilayer. The Extracellular portion of the chain corresponds to 97-108 (TYDWRGGDALCK). A disulfide bond links Cys107 and Cys187. A helical membrane pass occupies residues 109–129 (IVKMFHTFAFQSSSNVIVCIA). The Cytoplasmic portion of the chain corresponds to 130-152 (VDRLLSVLSPSHHSPNKALKRTK). Residues 153 to 173 (MMLIVAWIVALVISCPQLFIW) traverse the membrane as a helical segment. Over 174-222 (KAYLALPEYNWSQCLQIWEIARMEKFNKPQVVPEFDAEFWYSILHISLV) the chain is Extracellular. The helical transmembrane segment at 223–243 (FWIPCIIIMLSYIIVISWVWI) threads the bilayer. The Cytoplasmic portion of the chain corresponds to 244–345 (NSRPSIRHTS…NLNRSRALRV (102 aa)). A helical transmembrane segment spans residues 346–366 (SLLLVVAYIICWLPYNLISLI). Residues 367–382 (QFLDRDFFSSYLKHVH) lie on the Extracellular side of the membrane. Residues 383–403 (FCQQLIIFNSVVNPWLYGFFG) form a helical membrane-spanning segment. Residues 404 to 415 (PRRPSTTGAGRH) are Cytoplasmic-facing.

It belongs to the G-protein coupled receptor 1 family. As to quaternary structure, heterodimer; with daf-37. As to expression, expressed in the ASI and ASK chemosensory neurons and in the IL-2 interneurons, but weakly expressed in other head neurons in hermaphrodites.

It is found in the cell membrane. Functionally, G-protein coupled receptor (GPCR) that forms a heterodimer with daf-37 to control dauer formation and behavior. Required for the response to dauer inducing pheromones such as the ascarosides ascr#2, ascr#3 and ascr#5. The protein is G-protein coupled receptor daf-38 of Caenorhabditis elegans.